Consider the following 440-residue polypeptide: Tryptophan synthase beta chain 2 (440 aa).

An N6-(pyridoxal phosphate)lysine modification is found at lysine 110.

The protein belongs to the TrpB family. Tetramer of two alpha and two beta chains. Pyridoxal 5'-phosphate serves as cofactor.

It carries out the reaction (1S,2R)-1-C-(indol-3-yl)glycerol 3-phosphate + L-serine = D-glyceraldehyde 3-phosphate + L-tryptophan + H2O. The protein operates within amino-acid biosynthesis; L-tryptophan biosynthesis; L-tryptophan from chorismate: step 5/5. Its function is as follows. The beta subunit is responsible for the synthesis of L-tryptophan from indole and L-serine. This chain is Tryptophan synthase beta chain 2 (trpB2), found in Pyrococcus abyssi (strain GE5 / Orsay).